The following is a 217-amino-acid chain: GTP cyclohydrolase 1 (217 aa).

Residues cysteine 109, histidine 112, and cysteine 180 each coordinate Zn(2+).

Belongs to the GTP cyclohydrolase I family. Toroid-shaped homodecamer, composed of two pentamers of five dimers.

The catalysed reaction is GTP + H2O = 7,8-dihydroneopterin 3'-triphosphate + formate + H(+). Its pathway is cofactor biosynthesis; 7,8-dihydroneopterin triphosphate biosynthesis; 7,8-dihydroneopterin triphosphate from GTP: step 1/1. The polypeptide is GTP cyclohydrolase 1 (Vibrio parahaemolyticus serotype O3:K6 (strain RIMD 2210633)).